The chain runs to 230 residues: ATP synthase subunit a (230 aa).

5 consecutive transmembrane segments (helical) span residues 17-37, 78-98, 107-127, 165-187, and 198-218; these read LPIT…FIMA, IFPF…IGVI, DLSV…WFGI, LFGN…GFLV, and EAII…AGGI.

It belongs to the ATPase A chain family. As to quaternary structure, F-type ATPases have 2 components, CF(1) - the catalytic core - and CF(0) - the membrane proton channel. CF(1) has five subunits: alpha(3), beta(3), gamma(1), delta(1), epsilon(1). CF(0) has three main subunits: a(1), b(2) and c(9-12). The alpha and beta chains form an alternating ring which encloses part of the gamma chain. CF(1) is attached to CF(0) by a central stalk formed by the gamma and epsilon chains, while a peripheral stalk is formed by the delta and b chains.

It is found in the cell inner membrane. Key component of the proton channel; it plays a direct role in the translocation of protons across the membrane. The polypeptide is ATP synthase subunit a (Legionella pneumophila subsp. pneumophila (strain Philadelphia 1 / ATCC 33152 / DSM 7513)).